An 854-amino-acid polypeptide reads, in one-letter code: Probable disease resistance protein At1g51480 (854 aa).

Residues 25–62 (RNYIHKMEANLDDLHTTMEELKNGRDDLLRRVSIEEDK) adopt a coiled-coil conformation. The NB-ARC domain maps to 138–441 (AHKIPVPKVE…CEGYINPNRY (304 aa)). ATP is bound at residue 180–187 (GMGGVGKT). LRR repeat units lie at residues 514–535 (IVRQVSLISTQIEKISCSSKCS), 536–557 (NLSTLLLPYNKLVNISVGFFLF), 560–582 (KLVVLDLSTNMSLIELPEEISNL), 584–605 (SLQYLNLSSTGIKSLPGGMKKL), 607–629 (KLIYLNLEFSYKLESLVGISATL), and 631–652 (NLQVLKLFYSNVCVDDILMEEL).

This sequence belongs to the disease resistance NB-LRR family.

Its function is as follows. Probable disease resistance protein. The sequence is that of Probable disease resistance protein At1g51480 from Arabidopsis thaliana (Mouse-ear cress).